The following is an 84-amino-acid chain: MKVSVLITLAVLGVMFLLTSAEERGSDQMDSPAWLKSMEIIFQSEERECRWLFGGCEKDSDCCEHLGCRRAKPSWCGWDFTVGK.

Residues 1 to 21 form the signal peptide; sequence MKVSVLITLAVLGVMFLLTSA. Residues 22-47 constitute a propeptide that is removed on maturation; sequence EERGSDQMDSPAWLKSMEIIFQSEER. Intrachain disulfides connect C49–C63, C56–C68, and C62–C76. A Valine amide modification is found at V82.

Belongs to the neurotoxin 10 (Hwtx-1) family. 05 (F4a) subfamily. In terms of tissue distribution, expressed by the venom gland.

It is found in the secreted. In terms of biological role, probable ion channel inhibitor. The polypeptide is U21-theraphotoxin-Cg1a 1 (Chilobrachys guangxiensis (Chinese earth tiger tarantula)).